The primary structure comprises 299 residues: ATP phosphoribosyltransferase (299 aa).

The protein belongs to the ATP phosphoribosyltransferase family. Long subfamily. The cofactor is Mg(2+).

Its subcellular location is the cytoplasm. The enzyme catalyses 1-(5-phospho-beta-D-ribosyl)-ATP + diphosphate = 5-phospho-alpha-D-ribose 1-diphosphate + ATP. It functions in the pathway amino-acid biosynthesis; L-histidine biosynthesis; L-histidine from 5-phospho-alpha-D-ribose 1-diphosphate: step 1/9. Feedback inhibited by histidine. Its function is as follows. Catalyzes the condensation of ATP and 5-phosphoribose 1-diphosphate to form N'-(5'-phosphoribosyl)-ATP (PR-ATP). Has a crucial role in the pathway because the rate of histidine biosynthesis seems to be controlled primarily by regulation of HisG enzymatic activity. The polypeptide is ATP phosphoribosyltransferase (Actinobacillus pleuropneumoniae serotype 5b (strain L20)).